Here is a 202-residue protein sequence, read N- to C-terminus: Putative chromophore lyase CpcV (202 aa).

It belongs to the CpcS/CpeS biliprotein lyase family.

In terms of biological role, covalently attaches a chromophore to Cys residue(s) of phycobiliproteins. The polypeptide is Putative chromophore lyase CpcV (cpcV) (Picosynechococcus sp. (strain ATCC 27264 / PCC 7002 / PR-6) (Agmenellum quadruplicatum)).